A 443-amino-acid chain; its full sequence is uncharacterized protein (443 aa).

The next 4 helical transmembrane spans lie at 15-35 (IYAG…DGLA), 38-58 (LGMA…GPGS), 59-79 (AWQG…LSWL), and 181-201 (VVTA…IPAL). The tract at residues 231-270 (NFGIGNIGNANLGNGNIGNANLGSGNAGFFNFGNGNDGNT) is 4 X 10 AA approximate repeats.

Belongs to the mycobacterial PPE family.

Its subcellular location is the cell membrane. This is an uncharacterized protein from Mycobacterium tuberculosis (strain ATCC 25618 / H37Rv).